Reading from the N-terminus, the 92-residue chain is UPF0728 protein (92 aa).

It belongs to the UPF0728 family.

This Branchiostoma floridae (Florida lancelet) protein is UPF0728 protein.